We begin with the raw amino-acid sequence, 365 residues long: IgG receptor FcRn large subunit p51 (365 aa).

The first 23 residues, Met-1–Gly-23, serve as a signal peptide directing secretion. Positions Ala-24–Pro-110 are alpha-1. Residues Ala-24–Ser-297 are Extracellular-facing. The segment at Tyr-111–Lys-200 is alpha-2. Intrachain disulfides connect Cys-119–Cys-182 and Cys-221–Cys-275. Asn-125 is a glycosylation site (N-linked (GlcNAc...) asparagine). Residues Glu-201–Leu-290 are alpha-3. One can recognise an Ig-like C1-type domain in the interval Pro-202–Glu-289. The connecting peptide stretch occupies residues Glu-291–Ser-297. The helical transmembrane segment at Val-298–Trp-321 threads the bilayer. Residues Arg-322–Ala-365 lie on the Cytoplasmic side of the membrane. Ser-334 is modified (phosphoserine).

Belongs to the immunoglobulin superfamily. In terms of assembly, fcRn complex consists of two subunits: p51, and p14 which is equivalent to beta-2-microglobulin. It forms an MHC class I-like heterodimer. Interacts with albumin/ALB; this interaction regulates ALB homeostasis. As to quaternary structure, (Microbial infection) Interacts with Echovirus 6, Echovirus 11 and Echovirus 30 capsid protein VP1. Expressed in full-term placenta, heart, lung, liver, muscle, kidney, pancreas, and both fetal and adult small intestine.

Its subcellular location is the cell membrane. It is found in the endosome membrane. Cell surface receptor that transfers passive humoral immunity from the mother to the newborn. Binds to the Fc region of monomeric immunoglobulin gamma and mediates its selective uptake from milk. IgG in the milk is bound at the apical surface of the intestinal epithelium. The resultant FcRn-IgG complexes are transcytosed across the intestinal epithelium and IgG is released from FcRn into blood or tissue fluids. Throughout life, contributes to effective humoral immunity by recycling IgG and extending its half-life in the circulation. Mechanistically, monomeric IgG binding to FcRn in acidic endosomes of endothelial and hematopoietic cells recycles IgG to the cell surface where it is released into the circulation. In addition of IgG, regulates homeostasis of the other most abundant circulating protein albumin/ALB. Its function is as follows. (Microbial infection) Acts as an uncoating receptor for a panel of echoviruses including Echovirus 5, 6, 7, 9, 11, 13, 25 and 29. This chain is IgG receptor FcRn large subunit p51 (FCGRT), found in Homo sapiens (Human).